We begin with the raw amino-acid sequence, 124 residues long: uncharacterized protein (124 aa).

Its function is as follows. Not required for the biogenesis of c-type cytochromes. This is an uncharacterized protein from Rhodobacter capsulatus (strain ATCC BAA-309 / NBRC 16581 / SB1003).